The chain runs to 640 residues: SUMO-activating enzyme subunit 2 (640 aa).

Residues 24–29 (GAGGIG), D48, 56–59 (NLNR), K72, 95–96 (SI), and 117–122 (DNRAAR) contribute to the ATP site. Zn(2+) contacts are provided by C158 and C161. K164 participates in a covalent cross-link: Glycyl lysine isopeptide (Lys-Gly) (interchain with G-Cter in SUMO1). C173 functions as the Glycyl thioester intermediate in the catalytic mechanism. Residue K190 forms a Glycyl lysine isopeptide (Lys-Gly) (interchain with G-Cter in SUMO) linkage. A disordered region spans residues 202–231 (ADQEVSPDRADPEAAWEPTEAEARARASNE). S207 carries the post-translational modification Phosphoserine. Positions 222 to 231 (AEARARASNE) are enriched in basic and acidic residues. Residue K236 forms a Glycyl lysine isopeptide (Lys-Gly) (interchain with G-Cter in SUMO1); alternate linkage. Glycyl lysine isopeptide (Lys-Gly) (interchain with G-Cter in SUMO2); alternate cross-links involve residues K236 and K257. Residues K257 and K271 each participate in a glycyl lysine isopeptide (Lys-Gly) (interchain with G-Cter in SUMO); alternate cross-link. K271 carries the N6-acetyllysine; alternate modification. Residue K275 forms a Glycyl lysine isopeptide (Lys-Gly) (interchain with G-Cter in SUMO) linkage. A Glycyl lysine isopeptide (Lys-Gly) (interchain with G-Cter in SUMO2) cross-link involves residue K371. A Glycyl lysine isopeptide (Lys-Gly) (interchain with G-Cter in SUMO1); alternate cross-link involves residue K420. A Glycyl lysine isopeptide (Lys-Gly) (interchain with G-Cter in SUMO2); alternate cross-link involves residue K420. C441 and C444 together coordinate Zn(2+). Phosphoserine is present on S507. K540 participates in a covalent cross-link: Glycyl lysine isopeptide (Lys-Gly) (interchain with G-Cter in SUMO2). A compositionally biased stretch (basic and acidic residues) spans 551-563 (PEKVGPKQAEDAA). Residues 551–640 (PEKVGPKQAE…EELDDVIALD (90 aa)) form a disordered region. The span at 565 to 582 (SITNGSDDGAQPSTSTAQ) shows a compositional bias: polar residues. Residues 583–597 (EQDDVLIVDSDEEDS) show a composition bias toward acidic residues. Residue S592 is modified to Phosphoserine. Over residues 606–630 (EERSRKRKLDEKENLSAKRSRIEQK) the composition is skewed to basic and acidic residues. K611 participates in a covalent cross-link: Glycyl lysine isopeptide (Lys-Gly) (interchain with G-Cter in SUMO). Residue K613 forms a Glycyl lysine isopeptide (Lys-Gly) (interchain with G-Cter in SUMO); alternate linkage. An N6-acetyllysine; alternate modification is found at K613. Glycyl lysine isopeptide (Lys-Gly) (interchain with G-Cter in SUMO) cross-links involve residues K617 and K623. The segment covering 631-640 (EELDDVIALD) has biased composition (acidic residues).

The protein belongs to the ubiquitin-activating E1 family. Heterodimer of SAE1 and UBA2/SAE2. The heterodimer corresponds to the two domains that are encoded on a single polypeptide chain in ubiquitin-activating enzyme E1. Interacts with UBE2I. Sumoylated with SUMO1 and SUMO2/3 and by UBC9. Sumoylation at Lys-236 inhibits enzymatic activity. Sumoylation at the C-terminal lysine cluster plays an essential role in nuclear trafficking.

It is found in the cytoplasm. The protein localises to the nucleus. It functions in the pathway protein modification; protein sumoylation. The heterodimer acts as an E1 ligase for SUMO1, SUMO2, SUMO3, and probably SUMO4. It mediates ATP-dependent activation of SUMO proteins followed by formation of a thioester bond between a SUMO protein and a conserved active site cysteine residue on UBA2/SAE2. The chain is SUMO-activating enzyme subunit 2 (UBA2) from Homo sapiens (Human).